A 159-amino-acid chain; its full sequence is Probable E3 ubiquitin-protein ligase RHA1A (159 aa).

The RING-type; atypical zinc finger occupies 86–130 (CTVCLSDFESDDKVRQLPKCGHVFHHYCLDRWIVDYNKMKCPVCR).

In terms of tissue distribution, predominantly expressed in stems.

It catalyses the reaction S-ubiquitinyl-[E2 ubiquitin-conjugating enzyme]-L-cysteine + [acceptor protein]-L-lysine = [E2 ubiquitin-conjugating enzyme]-L-cysteine + N(6)-ubiquitinyl-[acceptor protein]-L-lysine.. It participates in protein modification; protein ubiquitination. In terms of biological role, probable E3 ubiquitin-protein ligase that may possess E3 ubiquitin ligase activity in vitro. This chain is Probable E3 ubiquitin-protein ligase RHA1A, found in Arabidopsis thaliana (Mouse-ear cress).